We begin with the raw amino-acid sequence, 315 residues long: Mycothiol acetyltransferase (315 aa).

N-acetyltransferase domains follow at residues 4 to 141 and 152 to 315; these read LDWR…RPLR and VVIR…GTDN. Residue E36 coordinates 1D-myo-inositol 2-(L-cysteinylamino)-2-deoxy-alpha-D-glucopyranoside. Acetyl-CoA contacts are provided by residues 80 to 82 and 88 to 93; these read LVV and RRGIGT. 3 residues coordinate 1D-myo-inositol 2-(L-cysteinylamino)-2-deoxy-alpha-D-glucopyranoside: E179, K224, and E234. Acetyl-CoA contacts are provided by residues 238-240 and 245-251; these read LGV and QRRGLGQ. Y282 lines the 1D-myo-inositol 2-(L-cysteinylamino)-2-deoxy-alpha-D-glucopyranoside pocket. Position 287–292 (287–292) interacts with acetyl-CoA; sequence NVAAVR.

It belongs to the acetyltransferase family. MshD subfamily. As to quaternary structure, monomer.

It catalyses the reaction 1D-myo-inositol 2-(L-cysteinylamino)-2-deoxy-alpha-D-glucopyranoside + acetyl-CoA = mycothiol + CoA + H(+). Functionally, catalyzes the transfer of acetyl from acetyl-CoA to desacetylmycothiol (Cys-GlcN-Ins) to form mycothiol. The chain is Mycothiol acetyltransferase from Mycobacterium bovis (strain ATCC BAA-935 / AF2122/97).